Consider the following 183-residue polypeptide: Protein CT_584 (183 aa).

Belongs to the chlamydial CPn_0803/CT_584/TC_0873 family.

In Chlamydia trachomatis serovar D (strain ATCC VR-885 / DSM 19411 / UW-3/Cx), this protein is Protein CT_584.